Reading from the N-terminus, the 312-residue chain is Ribosomal RNA small subunit methyltransferase H (312 aa).

Residues 33 to 35 (GGY), Asp51, Phe78, Asp97, and Gln104 each bind S-adenosyl-L-methionine.

The protein belongs to the methyltransferase superfamily. RsmH family.

Its subcellular location is the cytoplasm. It catalyses the reaction cytidine(1402) in 16S rRNA + S-adenosyl-L-methionine = N(4)-methylcytidine(1402) in 16S rRNA + S-adenosyl-L-homocysteine + H(+). In terms of biological role, specifically methylates the N4 position of cytidine in position 1402 (C1402) of 16S rRNA. The sequence is that of Ribosomal RNA small subunit methyltransferase H from Orientia tsutsugamushi (strain Ikeda) (Rickettsia tsutsugamushi).